Consider the following 757-residue polypeptide: Serine/threonine-protein phosphatase with EF-hands 2 (757 aa).

The 26-residue stretch at 21-46 (KAAALIQRWYRRYMARLEMRRRCTWN) folds into the IQ domain. The tract at residues 128–544 (ATALVEAFRL…PHIVQYQANK (417 aa)) is catalytic. The Mn(2+) site is built by aspartate 179, histidine 181, aspartate 208, and asparagine 240. Catalysis depends on histidine 241, which acts as the Proton donor. Histidine 292 lines the Mn(2+) pocket. Residues 318–349 (CKTRKESENREEQKRKDNQTSSGQKPTPWFLP) form a disordered region. Basic and acidic residues predominate over residues 321 to 335 (RKESENREEQKRKDN). Histidine 492 is a Mn(2+) binding site. 3 EF-hand domains span residues 572–607 (AHSSDLLVEFRKRDPDESGVITLSDWATAVESVLHL), 656–691 (RNRSNLETIFRIIDSDHSGFISLDEFRQTWKLFSSH), and 696–731 (ITDDGICDLARSIDFNKDGHIDINEFLEAFRLVEQS). 13 residues coordinate Ca(2+): aspartate 585, aspartate 587, serine 589, aspartate 596, aspartate 669, aspartate 671, serine 673, glutamate 680, aspartate 709, asparagine 711, aspartate 713, histidine 715, and glutamate 720.

Belongs to the PPP phosphatase family. Mn(2+) serves as cofactor. In terms of tissue distribution, detected in retina, more specifically in photoreceptors.

The enzyme catalyses O-phospho-L-seryl-[protein] + H2O = L-seryl-[protein] + phosphate. It catalyses the reaction O-phospho-L-threonyl-[protein] + H2O = L-threonyl-[protein] + phosphate. Activated by calcium. Functionally, may play a role in phototransduction. May dephosphorylate photoactivated rhodopsin. May function as a calcium sensing regulator of ionic currents, energy production or synaptic transmission. This chain is Serine/threonine-protein phosphatase with EF-hands 2 (Ppef2), found in Mus musculus (Mouse).